A 41-amino-acid polypeptide reads, in one-letter code: Trypsin inhibitor 2c (41 aa).

2 cysteine pairs are disulfide-bonded: C11–C32 and C15–C28.

Inhibits bovine trypsin with a Ki of 0.174 nM and trypsin-like proteases from G.mellonella larvae. Has no activity against serine proteases chymotrypsin, subtilisin and elastase. Has no activity against cysteine proteases from beetle gut. The chain is Trypsin inhibitor 2c from Fagopyrum esculentum (Common buckwheat).